Consider the following 396-residue polypeptide: NADH-quinone oxidoreductase subunit D (396 aa).

It belongs to the complex I 49 kDa subunit family. As to quaternary structure, NDH-1 is composed of 14 different subunits. Subunits NuoB, C, D, E, F, and G constitute the peripheral sector of the complex.

It is found in the cell inner membrane. It catalyses the reaction a quinone + NADH + 5 H(+)(in) = a quinol + NAD(+) + 4 H(+)(out). Functionally, NDH-1 shuttles electrons from NADH, via FMN and iron-sulfur (Fe-S) centers, to quinones in the respiratory chain. The immediate electron acceptor for the enzyme in this species is believed to be ubiquinone. Couples the redox reaction to proton translocation (for every two electrons transferred, four hydrogen ions are translocated across the cytoplasmic membrane), and thus conserves the redox energy in a proton gradient. The polypeptide is NADH-quinone oxidoreductase subunit D (Brucella melitensis biotype 1 (strain ATCC 23456 / CCUG 17765 / NCTC 10094 / 16M)).